We begin with the raw amino-acid sequence, 454 residues long: Toluate 1,2-dioxygenase subunit alpha (454 aa).

The 98-residue stretch at 51 to 148 folds into the Rieske domain; it reads IYLAHESQIP…SFDCDGSHDL (98 aa). [2Fe-2S] cluster contacts are provided by Cys-92, His-94, Cys-112, and His-115. Fe cation contacts are provided by His-221 and His-226.

The protein belongs to the bacterial ring-hydroxylating dioxygenase alpha subunit family. This dioxygenase system consists of three proteins: the two subunits of the hydroxylase component (XylX and XylY), and an electron transfer component (XylZ). It depends on [2Fe-2S] cluster as a cofactor. Fe cation serves as cofactor.

It functions in the pathway xenobiotic degradation; toluene degradation. This Pseudomonas putida (Arthrobacter siderocapsulatus) protein is Toluate 1,2-dioxygenase subunit alpha (xylX).